The sequence spans 374 residues: Methylthioribose-1-phosphate isomerase (374 aa).

Residue D256 is the Proton donor of the active site.

This sequence belongs to the eIF-2B alpha/beta/delta subunits family. MtnA subfamily.

It is found in the cytoplasm. The protein localises to the nucleus. The enzyme catalyses 5-(methylsulfanyl)-alpha-D-ribose 1-phosphate = 5-(methylsulfanyl)-D-ribulose 1-phosphate. It participates in amino-acid biosynthesis; L-methionine biosynthesis via salvage pathway; L-methionine from S-methyl-5-thio-alpha-D-ribose 1-phosphate: step 1/6. Catalyzes the interconversion of methylthioribose-1-phosphate (MTR-1-P) into methylthioribulose-1-phosphate (MTRu-1-P). In Leishmania braziliensis, this protein is Methylthioribose-1-phosphate isomerase.